A 198-amino-acid polypeptide reads, in one-letter code: Transmembrane gamma-carboxyglutamic acid protein 2 (198 aa).

A signal peptide spans 1–17 (MRGRPSLLLVYMGLATC). Residues 18–51 (LDTSPHREQNQVLDIFLDAPEAQSFLVGRRRFPR) constitute a propeptide that is removed on maturation. One can recognise a Gla domain in the interval 52-98 (ANHWDLELLTPGNLERECLEERCSWEEAREYFEDNTLTERFWESYTY). Residues 52 to 111 (ANHWDLELLTPGNLERECLEERCSWEEAREYFEDNTLTERFWESYTYNGKGGRGRVDVAG) lie on the Extracellular side of the membrane. Cysteines 69 and 74 form a disulfide. E72 is modified (4-carboxyglutamate). Residues 112-132 (LAVGLTSGILLIVLAGLGAFW) traverse the membrane as a helical segment. Residues 133–198 (YLHYRRRRLR…PPYSSLRRPH (66 aa)) are Cytoplasmic-facing. The tract at residues 156-198 (PLSPQTPQSPPLPPGLPTYEQALAASGVHDAPPPPYSSLRRPH) is disordered. Positions 162–171 (PQSPPLPPGL) are enriched in pro residues. The short motif at 171–174 (LPTY) is the LPXY motif; mediates binding to WW domain-containing proteins element. The PPXY motif; mediates binding to WW domain-containing proteins signature appears at 188-191 (PPPY).

Interacts with NEDD4. Interacts with transcriptional coactivator YAP1. Post-translationally, gamma-carboxyglutamate residues are formed by vitamin K dependent carboxylation. These residues are essential for the binding of calcium.

It localises to the cell membrane. The chain is Transmembrane gamma-carboxyglutamic acid protein 2 (Prrg2) from Mus musculus (Mouse).